We begin with the raw amino-acid sequence, 267 residues long: Indole-3-glycerol phosphate synthase (267 aa).

This sequence belongs to the TrpC family.

The enzyme catalyses 1-(2-carboxyphenylamino)-1-deoxy-D-ribulose 5-phosphate + H(+) = (1S,2R)-1-C-(indol-3-yl)glycerol 3-phosphate + CO2 + H2O. The protein operates within amino-acid biosynthesis; L-tryptophan biosynthesis; L-tryptophan from chorismate: step 4/5. This chain is Indole-3-glycerol phosphate synthase, found in Cupriavidus pinatubonensis (strain JMP 134 / LMG 1197) (Cupriavidus necator (strain JMP 134)).